Here is a 734-residue protein sequence, read N- to C-terminus: Fc receptor-like protein 3 (734 aa).

The signal sequence occupies residues 1–17; sequence MLLWLLLLILTPGREQS. The Extracellular segment spans residues 18 to 573; it reads GVAPKAVLLL…GTSRNRTGLT (556 aa). 6 consecutive Ig-like C2-type domains span residues 21 to 98, 99 to 182, 192 to 270, 284 to 369, 383 to 470, and 476 to 563; these read PKAV…VEFS, PDWL…KPLN, PVLR…HSIK, PVSN…PILS, PVLT…LRVT, and PVLT…LNVT. 6 disulfide bridges follow: cysteine 44-cysteine 82, cysteine 120-cysteine 163, cysteine 211-cysteine 260, cysteine 309-cysteine 358, cysteine 404-cysteine 451, and cysteine 497-cysteine 544. Asparagine 561 carries N-linked (GlcNAc...) asparagine glycosylation. Residues 574 to 594 form a helical membrane-spanning segment; sequence AAGITGLVLSILVLAAAAALL. Over 595-734 the chain is Cytoplasmic; it reads HYARARRKPG…VPRVLLASDH (140 aa). The segment at 603-655 is disordered; it reads PGGLSATGTSSHSPSECQEPSSSRPSRIDPQEPTHSKPLAPMELEPMYSNVNP. Positions 608–627 are enriched in polar residues; sequence ATGTSSHSPSECQEPSSSRP. Basic and acidic residues predominate over residues 628–637; the sequence is SRIDPQEPTH. Short sequence motifs (ITIM motif) lie at residues 648–653, 660–665, 690–695, and 720–725; these read PMYSNV, PIYSQI, VLYSEL, and ENYENV. A phosphotyrosine mark is found at tyrosine 650, tyrosine 662, tyrosine 692, and tyrosine 722. The disordered stretch occupies residues 695 to 734; it reads LKKTHPDDSAGEASSRGRAHEEDDEENYENVPRVLLASDH.

In terms of assembly, interacts (via phosphorylated ITIM motifs) with phosphatases INPP5D, PTPN6 and PTPN11. Interacts (via ITIM motifs) SYK and ZAP70. Interacts with IZUMO1R/JUNO. Interacts (via extracellular domain) with IZUMO1; the interaction replaces IZUMO1R/JUNO as IZUMO1 receptor after adhesion between sperm and egg. Post-translationally, phosphorylated on cytoplasmic tyrosines; required for interaction with protein tyrosine phosphatases and protein tyrosine kinases. As to expression, primarily expressed in secondary lymphoid tissues by mature subsets of B-cells. Low expression on transitional B cells which increases to higher surface expression on mature and memory B-cells with innate-like features (at protein level). Expressed a low levels in naive and germinal center B-cells but also expressed in NK cells (at protein level). Expressed in unfertilized oocytes (at protein level). Expressed in a population of thymically derived naturally occurring regulatory T-cells that exhibits a memory phenotype, specialized in suppressing immune response to self-antigens. Detected in spleen, lymph node, peripheral blood lymphocytes, thymus, bone marrow, kidney, salivary gland, adrenal gland and uterus.

The protein resides in the cell membrane. It localises to the cell projection. Its subcellular location is the microvillus membrane. Its function is as follows. Promotes TLR9-induced B-cell proliferation, activation and survival but inhibits antibody production and suppresses plasma cell differentiation. Enhances activation of NF-kappa-B and MAPK signaling pathways in TLR9 stimulated B-cells. Has inhibitory potentional on B-cell receptor (BCR)-mediated signaling, possibly through association with SH2 domain-containing phosphatases. Inhibits cell tyrosine phosphorylation, calcium mobilization and activation-induced cell death induced through BCR signaling. Regulatory T-cells expressing FCRL3 exhibit a memory phenotype, are relatively nonresponsive to antigenic stimulation in presence of IL2 and have reduced capacity to suppress the proliferation of effector T-cells. Acts as a human-specific epitope on the cell surface of oocytes (oolemma) and plays a role during sperm-egg adhesion and fusion. Interacts with the IZUMO1-IZUMO1R/JUNO sperm-egg complex and replaces IZUMO1R/JUNO as IZUMO1 receptor during fertilization, thereby permitting species-specific gamete fusion. This chain is Fc receptor-like protein 3, found in Homo sapiens (Human).